A 623-amino-acid polypeptide reads, in one-letter code: MYHLDNDSGVSTFALAPVKSTQRLWFTEGGHGNAISYPGADWFNMVQAELFSILDDAGIQPDKGRLNQISLAIRKLSEGKVEDFSQQLKQADGYKYIGRCKSVAELRTIRPTENGQRILVDAYYEGSTAGGGEFVADLQDLITPDDGGTCFVVPNNGGRWKRLFSSSLQDTDFGVIGGVADDTTNLNAFLDALRTYKVKGYFTSRHYKTSAALNIAGVDIEGVLAGYKNKHGTRITGNGNHNIFEQMGGELQHITYSLKNFALSGGIVGLKMTYAVNAVVENVFIDNVERAFLLGDSQFVGPIWCSLKNCRGEGRISGLEIDGNKWANANMFETCFFKGDEFAGSITAKGGIGAVSNHFVNTEFAGKGVGVKLGKNKSTAFDNCYFESEGPSLLIEDSTADLALNNATFGSLTENNKTGKTSFIHHSLGTCNMSISSGYIYLAGNNQNNLAFIESDKPESLVVNMATPVKREIYTATGFKLFKNPDLPNKNSRVHYTSGYVCEFSSQNKNAELGNGDLTAYYNLNNSRCAVGLNLKIGSSTTKGTGQWQFRLPFQASGIGKYYLGQAIAIKADGSKLMTGVARIVGGSNQVVAYFNNVNPADATRPFEWTEGDRLDISIEYEI.

To phage Mu protein S.

This Haemophilus influenzae (strain ATCC 51907 / DSM 11121 / KW20 / Rd) protein is Mu-like prophage FluMu defective tail fiber protein.